The following is a 1502-amino-acid chain: DNA-directed RNA polymerase subunit beta' (1502 aa).

Cysteine 60, cysteine 62, cysteine 75, and cysteine 78 together coordinate Zn(2+). Positions 265–293 are disordered; sequence RKQRDLEDAEQLTGAERERKEYEASQERE. The span at 279 to 293 shows a compositional bias: basic and acidic residues; it reads AERERKEYEASQERE. 3 residues coordinate Mg(2+): aspartate 626, aspartate 628, and aspartate 630. Cysteine 1002, cysteine 1075, cysteine 1082, and cysteine 1085 together coordinate Zn(2+). The segment at 1472 to 1502 is disordered; sequence SDDNGDEVGKNGEFADETPFTGDSDDRDNEI.

It belongs to the RNA polymerase beta' chain family. In terms of assembly, the RNAP catalytic core consists of 2 alpha, 1 beta, 1 beta' and 1 omega subunit. When a sigma factor is associated with the core the holoenzyme is formed, which can initiate transcription. The cofactor is Mg(2+). Requires Zn(2+) as cofactor.

It catalyses the reaction RNA(n) + a ribonucleoside 5'-triphosphate = RNA(n+1) + diphosphate. DNA-dependent RNA polymerase catalyzes the transcription of DNA into RNA using the four ribonucleoside triphosphates as substrates. This chain is DNA-directed RNA polymerase subunit beta', found in Roseiflexus castenholzii (strain DSM 13941 / HLO8).